We begin with the raw amino-acid sequence, 156 residues long: ATP synthase subunit b (156 aa).

A helical transmembrane segment spans residues 11-31; the sequence is AIAFAVFVWFCMKYVWPPLLA.

This sequence belongs to the ATPase B chain family. As to quaternary structure, F-type ATPases have 2 components, F(1) - the catalytic core - and F(0) - the membrane proton channel. F(1) has five subunits: alpha(3), beta(3), gamma(1), delta(1), epsilon(1). F(0) has three main subunits: a(1), b(2) and c(10-14). The alpha and beta chains form an alternating ring which encloses part of the gamma chain. F(1) is attached to F(0) by a central stalk formed by the gamma and epsilon chains, while a peripheral stalk is formed by the delta and b chains.

Its subcellular location is the cell inner membrane. F(1)F(0) ATP synthase produces ATP from ADP in the presence of a proton or sodium gradient. F-type ATPases consist of two structural domains, F(1) containing the extramembraneous catalytic core and F(0) containing the membrane proton channel, linked together by a central stalk and a peripheral stalk. During catalysis, ATP synthesis in the catalytic domain of F(1) is coupled via a rotary mechanism of the central stalk subunits to proton translocation. Its function is as follows. Component of the F(0) channel, it forms part of the peripheral stalk, linking F(1) to F(0). The protein is ATP synthase subunit b of Psychromonas ingrahamii (strain DSM 17664 / CCUG 51855 / 37).